The sequence spans 168 residues: Ribosome maturation factor RimM (168 aa).

In terms of domain architecture, PRC barrel spans 94 to 167 (DGQYYYHQII…FVTVELMEGL (74 aa)).

The protein belongs to the RimM family. In terms of assembly, binds ribosomal protein uS19.

The protein localises to the cytoplasm. Functionally, an accessory protein needed during the final step in the assembly of 30S ribosomal subunit, possibly for assembly of the head region. Essential for efficient processing of 16S rRNA. May be needed both before and after RbfA during the maturation of 16S rRNA. It has affinity for free ribosomal 30S subunits but not for 70S ribosomes. This chain is Ribosome maturation factor RimM, found in Limosilactobacillus reuteri (strain DSM 20016) (Lactobacillus reuteri).